The following is a 549-amino-acid chain: ATP synthase subunit alpha (549 aa).

172–179 (GDRKTGKT) is a binding site for ATP.

This sequence belongs to the ATPase alpha/beta chains family. In terms of assembly, F-type ATPases have 2 components, CF(1) - the catalytic core - and CF(0) - the membrane proton channel. CF(1) has five subunits: alpha(3), beta(3), gamma(1), delta(1), epsilon(1). CF(0) has three main subunits: a(1), b(2) and c(9-12). The alpha and beta chains form an alternating ring which encloses part of the gamma chain. CF(1) is attached to CF(0) by a central stalk formed by the gamma and epsilon chains, while a peripheral stalk is formed by the delta and b chains.

The protein resides in the cell membrane. It carries out the reaction ATP + H2O + 4 H(+)(in) = ADP + phosphate + 5 H(+)(out). In terms of biological role, produces ATP from ADP in the presence of a proton gradient across the membrane. The alpha chain is a regulatory subunit. The protein is ATP synthase subunit alpha of Mycobacterium tuberculosis (strain CDC 1551 / Oshkosh).